The sequence spans 353 residues: Photosystem II protein D1 (353 aa).

N-acetylthreonine is present on threonine 2. Threonine 2 is subject to Phosphothreonine. 3 helical membrane passes run 29-46 (YIGWFGVLMIPTLLTATS), 118-133 (HFLLGVACYMGREWEL), and 142-156 (WIAVAYSAPVAAATA). A chlorophyll a-binding site is contributed by histidine 118. Tyrosine 126 is a pheophytin a binding site. 2 residues coordinate [CaMn4O5] cluster: aspartate 170 and glutamate 189. A helical transmembrane segment spans residues 197–218 (FHMLGVAGVFGGSLFSAMHGSL). Histidine 198 serves as a coordination point for chlorophyll a. Residues histidine 215 and 264-265 (SF) each bind a quinone. Residue histidine 215 coordinates Fe cation. Fe cation is bound at residue histidine 272. Residues 274-288 (FLAAWPVVGIWFTAL) traverse the membrane as a helical segment. Positions 332, 333, 342, and 344 each coordinate [CaMn4O5] cluster. Positions 345-353 (ALEVPSING) are excised as a propeptide.

Belongs to the reaction center PufL/M/PsbA/D family. In terms of assembly, PSII is composed of 1 copy each of membrane proteins PsbA, PsbB, PsbC, PsbD, PsbE, PsbF, PsbH, PsbI, PsbJ, PsbK, PsbL, PsbM, PsbT, PsbX, PsbY, PsbZ, Psb30/Ycf12, at least 3 peripheral proteins of the oxygen-evolving complex and a large number of cofactors. It forms dimeric complexes. Requires The D1/D2 heterodimer binds P680, chlorophylls that are the primary electron donor of PSII, and subsequent electron acceptors. It shares a non-heme iron and each subunit binds pheophytin, quinone, additional chlorophylls, carotenoids and lipids. D1 provides most of the ligands for the Mn4-Ca-O5 cluster of the oxygen-evolving complex (OEC). There is also a Cl(-1) ion associated with D1 and D2, which is required for oxygen evolution. The PSII complex binds additional chlorophylls, carotenoids and specific lipids. as cofactor. Post-translationally, tyr-161 forms a radical intermediate that is referred to as redox-active TyrZ, YZ or Y-Z. C-terminally processed by CTPA; processing is essential to allow assembly of the oxygen-evolving complex and thus photosynthetic growth.

The protein resides in the plastid. It is found in the chloroplast thylakoid membrane. The catalysed reaction is 2 a plastoquinone + 4 hnu + 2 H2O = 2 a plastoquinol + O2. Photosystem II (PSII) is a light-driven water:plastoquinone oxidoreductase that uses light energy to abstract electrons from H(2)O, generating O(2) and a proton gradient subsequently used for ATP formation. It consists of a core antenna complex that captures photons, and an electron transfer chain that converts photonic excitation into a charge separation. The D1/D2 (PsbA/PsbD) reaction center heterodimer binds P680, the primary electron donor of PSII as well as several subsequent electron acceptors. The chain is Photosystem II protein D1 from Agrostis stolonifera (Creeping bentgrass).